The sequence spans 173 residues: RNA pyrophosphohydrolase (173 aa).

The region spanning 11–164 is the Nudix hydrolase domain; sequence PYRRSVGILV…KKHVYMKIVN (154 aa). Residues 52 to 73 carry the Nudix box motif; it reads GGIDENEEPLDAARRELYEETG.

It belongs to the Nudix hydrolase family. RppH subfamily. A divalent metal cation is required as a cofactor.

Functionally, accelerates the degradation of transcripts by removing pyrophosphate from the 5'-end of triphosphorylated RNA, leading to a more labile monophosphorylated state that can stimulate subsequent ribonuclease cleavage. The protein is RNA pyrophosphohydrolase of Bartonella henselae (strain ATCC 49882 / DSM 28221 / CCUG 30454 / Houston 1) (Rochalimaea henselae).